The sequence spans 157 residues: Ribosomal RNA large subunit methyltransferase H (157 aa).

S-adenosyl-L-methionine-binding positions include L73, G104, and 121 to 126; that span reads LSPLTL.

Belongs to the RNA methyltransferase RlmH family. Homodimer.

It is found in the cytoplasm. The enzyme catalyses pseudouridine(1915) in 23S rRNA + S-adenosyl-L-methionine = N(3)-methylpseudouridine(1915) in 23S rRNA + S-adenosyl-L-homocysteine + H(+). In terms of biological role, specifically methylates the pseudouridine at position 1915 (m3Psi1915) in 23S rRNA. The sequence is that of Ribosomal RNA large subunit methyltransferase H from Acidithiobacillus ferrooxidans (strain ATCC 23270 / DSM 14882 / CIP 104768 / NCIMB 8455) (Ferrobacillus ferrooxidans (strain ATCC 23270)).